The following is a 339-amino-acid chain: Anthranilate phosphoribosyltransferase (339 aa).

5-phospho-alpha-D-ribose 1-diphosphate contacts are provided by residues G81, 84–85, S89, 91–94, 109–117, and A121; these read GD, NVSS, and KHGNRALSS. Anthranilate is bound at residue G81. Residue S93 participates in Mg(2+) binding. N112 contacts anthranilate. R167 contacts anthranilate. Positions 225 and 226 each coordinate Mg(2+).

This sequence belongs to the anthranilate phosphoribosyltransferase family. In terms of assembly, homodimer. Mg(2+) serves as cofactor.

The enzyme catalyses N-(5-phospho-beta-D-ribosyl)anthranilate + diphosphate = 5-phospho-alpha-D-ribose 1-diphosphate + anthranilate. Its pathway is amino-acid biosynthesis; L-tryptophan biosynthesis; L-tryptophan from chorismate: step 2/5. Functionally, catalyzes the transfer of the phosphoribosyl group of 5-phosphorylribose-1-pyrophosphate (PRPP) to anthranilate to yield N-(5'-phosphoribosyl)-anthranilate (PRA). The sequence is that of Anthranilate phosphoribosyltransferase from Brucella suis biovar 1 (strain 1330).